The primary structure comprises 508 residues: GMP synthase [glutamine-hydrolyzing] (508 aa).

One can recognise a Glutamine amidotransferase type-1 domain in the interval 1 to 189; that stretch reads MILVLDFGSQ…ALLVCGCEKT (189 aa). Residue Cys78 is the Nucleophile of the active site. Active-site residues include His163 and Glu165. The region spanning 190–383 is the GMPS ATP-PPase domain; the sequence is WGMQHFAQRE…LGVSQDFLMR (194 aa). 217-223 is a binding site for ATP; it reads SGGVDST.

Homodimer.

The catalysed reaction is XMP + L-glutamine + ATP + H2O = GMP + L-glutamate + AMP + diphosphate + 2 H(+). The protein operates within purine metabolism; GMP biosynthesis; GMP from XMP (L-Gln route): step 1/1. Its function is as follows. Catalyzes the synthesis of GMP from XMP. This Helicobacter pylori (strain J99 / ATCC 700824) (Campylobacter pylori J99) protein is GMP synthase [glutamine-hydrolyzing] (guaA).